Consider the following 526-residue polypeptide: MLGRTLREVSVELKQGQITPTELCQRCLSLIKKTKFLNAYITVSEEVALKQAEESEKRYKKGHSLGDLDGIPIAVKDNFSTSGIETTCASNMLKGYVPPYNATVVQKLLDQGALLMGKTNLDEFAMGSGSTDGIFGPVKNPWSYSKQYREKRKQNSHSENEDSNWLITGGSSGGSAAAVSAFTCFAALGSDTGGSTRNPAAHCGVVGLKPSYGLVSRHGLIPLVNSMDVPGILTRCVDDAATVLGVLAGHDPKDSTTIQDPVKPFTLPSLTDVSKLCIGIPKEYLTPELSSEVQSLWSKAANLFESEGAKVTEVSLPHTSYSIVCYHVLCTSEVASNMARFDGLEYGHRCDSDVSTEAMYAATRREGFNDVVRGRILSGNFFLLKENYENYFVKAQKVRRLIANDFVNVFNSGVDVLLTPTTLSEAVPYTEFIKEDNRTRSAQDDIFTQAVNMAGLPAVSVPVALSSQGLPIGLQFIGRAFCDQQLLIVAKWFEKQVQFPVIQLQELMDDCSSVFENEKLASVSLK.

Lys-76 acts as the Charge relay system in catalysis. The disordered stretch occupies residues 147–166 (QYREKRKQNSHSENEDSNWL). Catalysis depends on Ser-171, which acts as the Charge relay system. Ser-195 serves as the catalytic Acyl-ester intermediate.

Belongs to the amidase family. GatA subfamily. In terms of assembly, subunit of the heterotrimeric GatCAB amidotransferase (AdT) complex, composed of A (QRSL1), B (GATB) and C (GATC) subunits.

The protein resides in the mitochondrion. It carries out the reaction L-glutamyl-tRNA(Gln) + L-glutamine + ATP + H2O = L-glutaminyl-tRNA(Gln) + L-glutamate + ADP + phosphate + H(+). Functionally, allows the formation of correctly charged Gln-tRNA(Gln) through the transamidation of misacylated Glu-tRNA(Gln) in the mitochondria. The reaction takes place in the presence of glutamine and ATP through an activated gamma-phospho-Glu-tRNA(Gln). The sequence is that of Glutamyl-tRNA(Gln) amidotransferase subunit A, mitochondrial from Bos taurus (Bovine).